We begin with the raw amino-acid sequence, 1175 residues long: DNA-directed RNA polymerase subunit beta (1175 aa).

The disordered stretch occupies residues 1142–1175 (PMELSGSDDDEFDQAGASLGINLSRDERSDADIA). A compositionally biased stretch (basic and acidic residues) spans 1165–1175 (SRDERSDADIA).

It belongs to the RNA polymerase beta chain family. As to quaternary structure, the RNAP catalytic core consists of 2 alpha, 1 beta, 1 beta' and 1 omega subunit. When a sigma factor is associated with the core the holoenzyme is formed, which can initiate transcription.

It carries out the reaction RNA(n) + a ribonucleoside 5'-triphosphate = RNA(n+1) + diphosphate. In terms of biological role, DNA-dependent RNA polymerase catalyzes the transcription of DNA into RNA using the four ribonucleoside triphosphates as substrates. This is DNA-directed RNA polymerase subunit beta from Corynebacterium diphtheriae (strain ATCC 700971 / NCTC 13129 / Biotype gravis).